Reading from the N-terminus, the 145-residue chain is Ornithine decarboxylase antizyme (145 aa).

It belongs to the ODC antizyme family. Interacts with ODC1 and thereby sterically blocks ODC homodimerization.

In terms of biological role, ornithine decarboxylase (ODC) antizyme protein that negatively regulates ODC activity and intracellular polyamine biosynthesis and uptake in response to increased intracellular polyamine levels. Binds to ODC monomers, inhibiting the assembly of the functional ODC homodimer, and targets the monomers for ubiquitin-independent proteolytic destruction by the 26S proteasome. This is Ornithine decarboxylase antizyme from Onchocerca volvulus.